The sequence spans 509 residues: ATP synthase subunit alpha (509 aa).

Residue Gly-169–Thr-176 participates in ATP binding.

The protein belongs to the ATPase alpha/beta chains family. F-type ATPases have 2 components, CF(1) - the catalytic core - and CF(0) - the membrane proton channel. CF(1) has five subunits: alpha(3), beta(3), gamma(1), delta(1), epsilon(1). CF(0) has three main subunits: a(1), b(2) and c(9-12). The alpha and beta chains form an alternating ring which encloses part of the gamma chain. CF(1) is attached to CF(0) by a central stalk formed by the gamma and epsilon chains, while a peripheral stalk is formed by the delta and b chains.

It localises to the cell inner membrane. The enzyme catalyses ATP + H2O + 4 H(+)(in) = ADP + phosphate + 5 H(+)(out). Produces ATP from ADP in the presence of a proton gradient across the membrane. The alpha chain is a regulatory subunit. The protein is ATP synthase subunit alpha of Agrobacterium fabrum (strain C58 / ATCC 33970) (Agrobacterium tumefaciens (strain C58)).